The sequence spans 251 residues: 2,3-bisphosphoglycerate-dependent phosphoglycerate mutase (251 aa).

Residues 7–14, 20–21, Arg-59, 86–89, Lys-97, 113–114, and 186–187 each bind substrate; these read RHGESEWN, TG, ERHY, RR, and GN. His-8 functions as the Tele-phosphohistidine intermediate in the catalytic mechanism. The Proton donor/acceptor role is filled by Glu-86.

The protein belongs to the phosphoglycerate mutase family. BPG-dependent PGAM subfamily.

The catalysed reaction is (2R)-2-phosphoglycerate = (2R)-3-phosphoglycerate. It participates in carbohydrate degradation; glycolysis; pyruvate from D-glyceraldehyde 3-phosphate: step 3/5. In terms of biological role, catalyzes the interconversion of 2-phosphoglycerate and 3-phosphoglycerate. This Treponema pallidum (strain Nichols) protein is 2,3-bisphosphoglycerate-dependent phosphoglycerate mutase.